Consider the following 209-residue polypeptide: Regulator of G-protein signaling 1 (209 aa).

Residues Ser-85 to Leu-200 enclose the RGS domain.

In terms of assembly, interacts with GNAI1 and GNAQ. Detected in peripheral blood monocytes. Expression is relatively low in B-cells and chronic lymphocytic leukemia B-cells; however, in other types of malignant B-cell such as non-Hodgkin lymphoma and hairy cell leukemia, expression is constitutively high.

Its subcellular location is the cell membrane. It localises to the cytoplasm. The protein localises to the cytosol. Functionally, regulates G protein-coupled receptor signaling cascades, including signaling downstream of the N-formylpeptide chemoattractant receptors and leukotriene receptors. Inhibits B cell chemotaxis toward CXCL12. Inhibits signal transduction by increasing the GTPase activity of G protein alpha subunits thereby driving them into their inactive GDP-bound form. This chain is Regulator of G-protein signaling 1 (RGS1), found in Homo sapiens (Human).